The primary structure comprises 570 residues: MQSDIEISRQHTCLPITEIAKDLGLNPDEFSPCGVNKAKVSQSVARRLADKKNAKLVIVTAVTPTPFGEGKTVTTIGLTQAMNLNGIKTCACIRQPSMGPVFGTKGGAAGGGYAQVVPMEELNLHLTGDIHAVSSAHNLAAAAIDARLFHEHRLGAEVFAQESGLSALNIDSENILWRRVVDHNERSLRQIKVGYGKVNGPVHESGFDITAASELMAILALSQDLKDLRQRIGRLVLALNTQGEPITAEELGVAGAMTVIMADAIEPTLMQTLSGDPCFIHAGPFANIAHGNSSIIADTIAAKLADVVITEAGFGSDMGFEKFSNIKVRESGYAPSASVVVVTLKALKANSGIESDKDINQPDMERLQAGFANLEWHINNVSQYGVPVVVAINRFPTDTDEELEWLKQAVEQTKAFGSEISEAFGKGAEGATKLADMVYHATQTPSDFKLLYQSDTSLEAKLMTLAEVGYGASSVTLSDKAKSQLHWLTKHNYGQLPICVAKTPMSISHDPSIKGIPTEFELPITELRLNAGAGFVTALVGQVMTMPGLGIKPGYLNVDINDDGEIIGLA.

Residue 65 to 72 (TPFGEGKT) participates in ATP binding.

The protein belongs to the formate--tetrahydrofolate ligase family.

It carries out the reaction (6S)-5,6,7,8-tetrahydrofolate + formate + ATP = (6R)-10-formyltetrahydrofolate + ADP + phosphate. The protein operates within one-carbon metabolism; tetrahydrofolate interconversion. This is Formate--tetrahydrofolate ligase from Shewanella halifaxensis (strain HAW-EB4).